We begin with the raw amino-acid sequence, 325 residues long: L-lactate dehydrogenase (325 aa).

Residues Val-19, Asp-40, Lys-45, Tyr-70, and 84–85 (GA) each bind NAD(+). Gln-87 and Arg-93 together coordinate substrate. Residues Thr-106, 123-125 (AAN), and Ser-148 each bind NAD(+). A substrate-binding site is contributed by 125 to 128 (NPVD). 153–156 (DSAR) serves as a coordination point for substrate. Arg-158 and His-173 together coordinate beta-D-fructose 1,6-bisphosphate. Residue His-180 is the Proton acceptor of the active site. At Tyr-225 the chain carries Phosphotyrosine. Thr-234 lines the substrate pocket.

Belongs to the LDH/MDH superfamily. LDH family. Homotetramer.

Its subcellular location is the cytoplasm. The catalysed reaction is (S)-lactate + NAD(+) = pyruvate + NADH + H(+). It participates in fermentation; pyruvate fermentation to lactate; (S)-lactate from pyruvate: step 1/1. With respect to regulation, allosterically activated by fructose 1,6-bisphosphate (FBP). Catalyzes the conversion of lactate to pyruvate. This chain is L-lactate dehydrogenase, found in Latilactobacillus sakei (Lactobacillus sakei).